The chain runs to 96 residues: RxLR effector protein PITG_11507 (96 aa).

Positions 1–19 (MRLSFIIVAVSLLAGGSGA) are cleaved as a signal peptide. Positions 27 to 59 (SDVLTSRGTNEGARTGKRSLRYDSNVERTGEED) are disordered. The short motif at 44-59 (RSLRYDSNVERTGEED) is the RxLR-dEER element. A compositionally biased stretch (basic and acidic residues) spans 46 to 55 (LRYDSNVERT).

The protein belongs to the RxLR effector family.

It is found in the secreted. Its subcellular location is the host nucleus. The protein localises to the host cytoplasm. Effector that enhances P.infestans colonization of Nicotiana benthamiana leaves. The chain is RxLR effector protein PITG_11507 from Phytophthora infestans (strain T30-4) (Potato late blight agent).